A 306-amino-acid polypeptide reads, in one-letter code: Ribonuclease Z (306 aa).

7 residues coordinate Zn(2+): His63, His65, Asp67, His68, His141, Asp211, and His269. Asp67 serves as the catalytic Proton acceptor.

It belongs to the RNase Z family. In terms of assembly, homodimer. Zn(2+) serves as cofactor.

The enzyme catalyses Endonucleolytic cleavage of RNA, removing extra 3' nucleotides from tRNA precursor, generating 3' termini of tRNAs. A 3'-hydroxy group is left at the tRNA terminus and a 5'-phosphoryl group is left at the trailer molecule.. In terms of biological role, zinc phosphodiesterase, which displays some tRNA 3'-processing endonuclease activity. Probably involved in tRNA maturation, by removing a 3'-trailer from precursor tRNA. The protein is Ribonuclease Z of Staphylococcus epidermidis (strain ATCC 35984 / DSM 28319 / BCRC 17069 / CCUG 31568 / BM 3577 / RP62A).